A 300-amino-acid polypeptide reads, in one-letter code: tRNA pseudouridine synthase B (300 aa).

Asp47 serves as the catalytic Nucleophile.

Belongs to the pseudouridine synthase TruB family. Type 1 subfamily.

It carries out the reaction uridine(55) in tRNA = pseudouridine(55) in tRNA. Responsible for synthesis of pseudouridine from uracil-55 in the psi GC loop of transfer RNAs. The polypeptide is tRNA pseudouridine synthase B (Azoarcus sp. (strain BH72)).